The primary structure comprises 126 residues: Protein ApaG (126 aa).

The ApaG domain occupies 2–126; it reads DVSQPRIQIQ…FRLAVPNILN (125 aa).

This chain is Protein ApaG, found in Vibrio vulnificus (strain CMCP6).